Here is a 755-residue protein sequence, read N- to C-terminus: Proprotein convertase subtilisin/kexin type 4 (755 aa).

Residues 1-25 (MRPAPIALWLRLVLALALVRPRAVG) form the signal peptide. The propeptide occupies 26–113 (WAPVRAPIYV…QQTLQRRVKR (88 aa)). The Peptidase S8 domain maps to 126–440 (QWYMNSEAQP…YGLLDAGLLV (315 aa)). Residues D158, H199, and S373 each act as charge relay system in the active site. The region spanning 449-581 (TQPQRKCAVR…TLLLYGTAED (133 aa)) is the P/Homo B domain. N-linked (GlcNAc...) asparagine glycosylation is found at N475 and N629. Residues 709–729 (AMVLSLLAVTLGGPVLCGMSM) traverse the membrane as a helical segment.

This sequence belongs to the peptidase S8 family. Furin subfamily. The proPCSK4 form interacts with HSPA5; the interaction takes place at the endoplasmic reticulum. Post-translationally, N-glycosylated. Synthesized in the endoplasmic reticulum as a zymogen, is matured by autocatalytic cleavage between the prodomain and the catalytic domain. As to expression, placenta.

The protein localises to the membrane. It is found in the cytoplasmic vesicle. The protein resides in the secretory vesicle. Its subcellular location is the acrosome membrane. Functionally, proprotein convertase involved in the processing of hormone and other protein precursors at sites comprised of pairs of basic amino acid residues. In males, important for ADAM2 processing as well as other acrosomal proteins with roles in fertilization and critical for normal fertilization events such as sperm capacitation, acrosome reaction and binding of sperm to zona pellucida. Also plays a role in female fertility, involved in the regulation of trophoblast migration and placental development, may be through the proteolytical processing and activation of proteins such as IGF2. May also participate in folliculogenesis in the ovaries. The polypeptide is Proprotein convertase subtilisin/kexin type 4 (Homo sapiens (Human)).